The sequence spans 918 residues: Signal transduction histidine-protein kinase BarA (918 aa).

Topologically, residues 1–9 (MTNYSLRAR) are cytoplasmic. A helical transmembrane segment spans residues 10-31 (MMILILAPTVLIGLLLSIFFVV). Topologically, residues 32 to 176 (HRYNDLQRQL…KSVRLQQYKE (145 aa)) are periplasmic. Residues 177–196 (IFISSVMMLFCIGIALIFGW) traverse the membrane as a helical segment. At 197–918 (RLMRDVTGPI…VAREASKILG (722 aa)) the chain is on the cytoplasmic side. The HAMP domain maps to 200–252 (RDVTGPIRNMVNTVDRIRRGQLDSRVEGFMLGELDMLKNGINSMAMSLAAYHE). Residues 299-520 (NMSHELRTPL…TFWFHINLDL (222 aa)) enclose the Histidine kinase domain. The residue at position 302 (His302) is a Phosphohistidine; by autocatalysis. The region spanning 669-785 (TVMAVDDNPA…RLHNLLLRYK (117 aa)) is the Response regulatory domain. Asp718 is subject to 4-aspartylphosphate. In terms of domain architecture, HPt spans 822 to 918 (KTDLARDMLQ…VAREASKILG (97 aa)). His861 is modified (phosphohistidine).

Activation requires a sequential transfer of a phosphate group from a His in the primary transmitter domain, to an Asp in the receiver domain and to a His in the secondary transmitter domain.

The protein localises to the cell inner membrane. The catalysed reaction is ATP + protein L-histidine = ADP + protein N-phospho-L-histidine.. In terms of biological role, member of the two-component regulatory system UvrY/BarA involved in the regulation of carbon metabolism via the CsrA/CsrB regulatory system. Phosphorylates UvrY, probably via a four-step phosphorelay. This is Signal transduction histidine-protein kinase BarA (barA) from Escherichia coli O157:H7.